A 135-amino-acid polypeptide reads, in one-letter code: ATP synthase epsilon chain 1 (135 aa).

Belongs to the ATPase epsilon chain family. In terms of assembly, F-type ATPases have 2 components, CF(1) - the catalytic core - and CF(0) - the membrane proton channel. CF(1) has five subunits: alpha(3), beta(3), gamma(1), delta(1), epsilon(1). CF(0) has three main subunits: a, b and c.

The protein localises to the cell inner membrane. Its function is as follows. Produces ATP from ADP in the presence of a proton gradient across the membrane. The protein is ATP synthase epsilon chain 1 of Nitrobacter hamburgensis (strain DSM 10229 / NCIMB 13809 / X14).